The chain runs to 573 residues: Glutamate--tRNA ligase (573 aa).

Positions 107 to 117 match the 'HIGH' region motif; sequence PNPDGAFHLGN.

The protein belongs to the class-I aminoacyl-tRNA synthetase family. Glutamate--tRNA ligase type 2 subfamily.

It localises to the cytoplasm. The enzyme catalyses tRNA(Glu) + L-glutamate + ATP = L-glutamyl-tRNA(Glu) + AMP + diphosphate. In terms of biological role, catalyzes the attachment of glutamate to tRNA(Glu) in a two-step reaction: glutamate is first activated by ATP to form Glu-AMP and then transferred to the acceptor end of tRNA(Glu). This Thermococcus kodakarensis (strain ATCC BAA-918 / JCM 12380 / KOD1) (Pyrococcus kodakaraensis (strain KOD1)) protein is Glutamate--tRNA ligase.